The sequence spans 258 residues: DNA repair protein RecO (258 aa).

It belongs to the RecO family.

Functionally, involved in DNA repair and RecF pathway recombination. This is DNA repair protein RecO from Oceanobacillus iheyensis (strain DSM 14371 / CIP 107618 / JCM 11309 / KCTC 3954 / HTE831).